The following is a 204-amino-acid chain: DNA-directed RNA polymerase subunit gamma (204 aa).

Cysteine 34, cysteine 36, cysteine 49, and cysteine 52 together coordinate Zn(2+).

The protein belongs to the RNA polymerase beta' chain family. RpoC1 subfamily. As to quaternary structure, in cyanobacteria the RNAP catalytic core is composed of 2 alpha, 1 beta, 1 beta', 1 gamma and 1 omega subunit. When a sigma factor is associated with the core the holoenzyme is formed, which can initiate transcription. Requires Zn(2+) as cofactor.

It catalyses the reaction RNA(n) + a ribonucleoside 5'-triphosphate = RNA(n+1) + diphosphate. In terms of biological role, DNA-dependent RNA polymerase catalyzes the transcription of DNA into RNA using the four ribonucleoside triphosphates as substrates. The polypeptide is DNA-directed RNA polymerase subunit gamma (rpoC1) (Prochlorococcus marinus (strain DV1)).